Consider the following 132-residue polypeptide: Small ribosomal subunit protein uS19 (132 aa).

The protein belongs to the universal ribosomal protein uS19 family. In terms of assembly, part of the 30S ribosomal subunit.

Its function is as follows. Protein S19 forms a complex with S13 that binds strongly to the 16S ribosomal RNA. In Pyrococcus furiosus (strain ATCC 43587 / DSM 3638 / JCM 8422 / Vc1), this protein is Small ribosomal subunit protein uS19.